The primary structure comprises 407 residues: F-box protein SKIP23 (407 aa).

Positions 2–50 constitute an F-box domain; it reads VDWSTLPKDLLDLISKSLESSFDLIQFRSVCSSWRSAAEPKSPLPTHHL.

As to quaternary structure, part of a SCF (ASK-cullin-F-box) protein ligase complex. Interacts with SKP1A/ASK1.

It is found in the nucleus. The protein operates within protein modification; protein ubiquitination. In terms of biological role, component of SCF(ASK-cullin-F-box) E3 ubiquitin ligase complexes, which may mediate the ubiquitination and subsequent proteasomal degradation of target proteins. This chain is F-box protein SKIP23 (SKIP23), found in Arabidopsis thaliana (Mouse-ear cress).